Reading from the N-terminus, the 778-residue chain is Ent-sandaracopimaradiene synthase KSL3, chloroplastic (778 aa).

The N-terminal 35 residues, 1–35 (MLLTSTNTLKISSQRKEWEAKDLTGMFHGQVNGRV), are a transit peptide targeting the chloroplast. Residues D527, E531, N670, D671, and D678 each coordinate Mg(2+). A DDXXD motif motif is present at residues 527-531 (DDFFE).

Belongs to the terpene synthase family. Requires Mg(2+) as cofactor.

The protein localises to the plastid. Its subcellular location is the chloroplast. It carries out the reaction ent-copalyl diphosphate = ent-sandaracopimara-8(14),15-diene + diphosphate. The catalysed reaction is ent-copalyl diphosphate = ent-(12E)-labda-8(17),12,14-triene + diphosphate. It participates in secondary metabolite biosynthesis; terpenoid biosynthesis. Its function is as follows. Diterpene cyclase involved in the biosynthesis of labdane-related diterpenoids (LRDs) natural products. Catalyzes the cyclization of ent-CDP into ent-sandaracopimaradiene as a major, and ent-pimaradiene and ent-labdatriene as minor products. The sequence is that of Ent-sandaracopimaradiene synthase KSL3, chloroplastic from Ricinus communis (Castor bean).